A 250-amino-acid polypeptide reads, in one-letter code: Probable transcriptional regulatory protein Cpha266_0538 (250 aa).

Belongs to the TACO1 family.

The protein localises to the cytoplasm. In Chlorobium phaeobacteroides (strain DSM 266 / SMG 266 / 2430), this protein is Probable transcriptional regulatory protein Cpha266_0538.